A 321-amino-acid polypeptide reads, in one-letter code: Transaldolase (321 aa).

Lys-132 functions as the Schiff-base intermediate with substrate in the catalytic mechanism.

The protein belongs to the transaldolase family. Type 1 subfamily. As to quaternary structure, homodimer.

It is found in the cytoplasm. The catalysed reaction is D-sedoheptulose 7-phosphate + D-glyceraldehyde 3-phosphate = D-erythrose 4-phosphate + beta-D-fructose 6-phosphate. It functions in the pathway carbohydrate degradation; pentose phosphate pathway; D-glyceraldehyde 3-phosphate and beta-D-fructose 6-phosphate from D-ribose 5-phosphate and D-xylulose 5-phosphate (non-oxidative stage): step 2/3. In terms of biological role, transaldolase is important for the balance of metabolites in the pentose-phosphate pathway. This is Transaldolase from Rhizobium etli (strain ATCC 51251 / DSM 11541 / JCM 21823 / NBRC 15573 / CFN 42).